Consider the following 269-residue polypeptide: Aquaporin-1 (269 aa).

The Cytoplasmic portion of the chain corresponds to 1 to 11 (MASEFKKKLFW). Residues 12-29 (RAVVAEFLAMTLFVFISI) form a helical membrane-spanning segment. The Extracellular portion of the chain corresponds to 30–46 (GSALGFKYPVGNNQTAV). A glycan (N-linked (GlcNAc...) asparagine) is linked at Asn-42. Residues 47-65 (QDNVKVSLAFGLSIATLAQ) traverse the membrane as a helical segment. Residues 66-68 (SVG) are Cytoplasmic-facing. Residues 69–82 (HISGAHLNPAVTLG) lie within the membrane without spanning it. Residues 76-78 (NPA) carry the NPA 1 motif. At 83-90 (LLLSCQIS) the chain is on the cytoplasmic side. The helical transmembrane segment at 91-109 (IFRALMYIIAQCVGAIVAT) threads the bilayer. At 110–133 (AILSGITSSLPGNSLGRNDLADGV) the chain is on the extracellular side. A helical membrane pass occupies residues 134-153 (NSGQGLGIEIIGTLQLVLCV). The Cytoplasmic portion of the chain corresponds to 154 to 163 (LATTDRRRRD). A helical membrane pass occupies residues 164–181 (LGGSAPLAIGLSVALGHL). Over 182 to 186 (LAIDY) the chain is Extracellular. An intramembrane segment occupies 187 to 199 (TGCGINPARSFGS). An NPA 2 motif is present at residues 192–194 (NPA). The Extracellular portion of the chain corresponds to 200–206 (AVITHNF). Asn-205 carries an N-linked (GlcNAc...) asparagine glycan. The helical transmembrane segment at 207 to 224 (SNHWIFWVGPFIGGALAV) threads the bilayer. Topologically, residues 225 to 269 (LIYDFILAPRSSDFTDRVKVWTSGQVEEYDLDADDINSRVEMKPK) are cytoplasmic. Ser-247 carries the post-translational modification Phosphoserine. Tyr-253 bears the Phosphotyrosine mark. Residue Ser-262 is modified to Phosphoserine.

The protein belongs to the MIP/aquaporin (TC 1.A.8) family. Homotetramer; each monomer provides an independent water pore. Component of the ankyrin-1 complex in the erythrocyte, composed of ANK1, RHCE, RHAG, SLC4A1, EPB42, GYPA, GYPB and AQP1. Interacts with EPHB2; involved in endolymph production in the inner ear. Identified in a complex with STOM. Interacts (via the N-terminal) with ANK1 (via ANK 1-5 repeats). Interacts (via the C-terminal) with EPB42.

The protein resides in the cell membrane. It carries out the reaction H2O(in) = H2O(out). The enzyme catalyses nitric oxide(out) = nitric oxide(in). It catalyses the reaction CO2(out) = CO2(in). The catalysed reaction is glycerol(in) = glycerol(out). It carries out the reaction H2O2(out) = H2O2(in). The enzyme catalyses K(+)(in) = K(+)(out). It catalyses the reaction Na(+)(in) = Na(+)(out). Functionally, forms a water channel that facilitates the transport of water across cell membranes, playing a crucial role in water homeostasis in various tissues. Could also be permeable to small solutes including hydrogen peroxide, glycerol and gases such as amonnia (NH3), nitric oxide (NO) and carbon dioxide (CO2). Recruited to the ankyrin-1 complex, a multiprotein complex of the erythrocyte membrane, it could be part of a CO2 metabolon, linking facilitated diffusion of CO2 across the membrane, anion exchange of Cl(-)/HCO3(-) and interconversion of dissolved CO2 and carbonic acid in the cytosol. In vitro, it shows non-selective gated cation channel activity and may be permeable to cations like K(+) and Na(+) in vivo. The polypeptide is Aquaporin-1 (Pongo abelii (Sumatran orangutan)).